The primary structure comprises 174 residues: Methionine-R-sulfoxide reductase B2, mitochondrial (174 aa).

A mitochondrion-targeting transit peptide spans 1-61 (MARLLRALRG…PEQFYVTREK (61 aa)). Positions 62-172 (GTEAPFSGMY…NSVALKFKPS (111 aa)) constitute a MsrB domain. Residues Cys-82, Cys-85, Cys-138, and Cys-141 each coordinate Zn(2+). The Nucleophile role is filled by Cys-161.

It belongs to the MsrB Met sulfoxide reductase family. It depends on Zn(2+) as a cofactor.

It localises to the mitochondrion. It catalyses the reaction L-methionyl-[protein] + [thioredoxin]-disulfide + H2O = L-methionyl-(R)-S-oxide-[protein] + [thioredoxin]-dithiol. It carries out the reaction [thioredoxin]-disulfide + L-methionine + H2O = L-methionine (R)-S-oxide + [thioredoxin]-dithiol. Methionine-sulfoxide reductase that specifically reduces methionine (R)-sulfoxide back to methionine. While in many cases, methionine oxidation is the result of random oxidation following oxidative stress, methionine oxidation is also a post-translational modification that takes place on specific residue. Upon oxidative stress, may play a role in the preservation of mitochondrial integrity by decreasing the intracellular reactive oxygen species build-up through its scavenging role, hence contributing to cell survival and protein maintenance. In Rattus norvegicus (Rat), this protein is Methionine-R-sulfoxide reductase B2, mitochondrial (Msrb2).